The following is a 545-amino-acid chain: Chaperonin GroEL (545 aa).

ATP-binding positions include 30-33 (TLGP), Lys51, 87-91 (DGTTT), Gly415, 479-481 (NAA), and Asp495.

The protein belongs to the chaperonin (HSP60) family. Forms a cylinder of 14 subunits composed of two heptameric rings stacked back-to-back. Interacts with the co-chaperonin GroES.

The protein resides in the cytoplasm. It carries out the reaction ATP + H2O + a folded polypeptide = ADP + phosphate + an unfolded polypeptide.. Together with its co-chaperonin GroES, plays an essential role in assisting protein folding. The GroEL-GroES system forms a nano-cage that allows encapsulation of the non-native substrate proteins and provides a physical environment optimized to promote and accelerate protein folding. This chain is Chaperonin GroEL, found in Salmonella agona (strain SL483).